A 588-amino-acid chain; its full sequence is Probable G-protein coupled receptor 162 (588 aa).

Over 1 to 17 (MARGGAGAEEASLRSNA) the chain is Extracellular. Residues 18-38 (LSWLACGLLALLANAWIILSI) form a helical membrane-spanning segment. Topologically, residues 39 to 49 (SAKQQKHKPLE) are cytoplasmic. Residues 50–70 (LLLCFLAGTHILMAAVPLTTF) form a helical membrane-spanning segment. The Extracellular portion of the chain corresponds to 71–91 (AVVQLRRQASSDYDWNESICK). Asparagine 86 carries an N-linked (GlcNAc...) asparagine glycan. The chain crosses the membrane as a helical span at residues 92-112 (VFVSTYYTLALATCFTVASLS). At 113-133 (YHRMWMVRWPVNYRLSNAKKQ) the chain is on the cytoplasmic side. Residues 134–154 (ALHAVMGIWMVSFILSTLPSI) traverse the membrane as a helical segment. Residues 155–174 (GWHNNGERYYARGCQFIVSK) lie on the Extracellular side of the membrane. Residues 175–195 (IGLGFGVCFSLLLLGGIVMGL) form a helical membrane-spanning segment. The Cytoplasmic segment spans residues 196 to 275 (VCVAITFYQT…SLQVTNLVSA (80 aa)). A helical transmembrane segment spans residues 276 to 296 (IVFLYDSLTGVPILVVSFFSL). Residues 297–303 (KSDSAPP) are Extracellular-facing. A helical membrane pass occupies residues 304-324 (WMVLAVLWCSMAQTLLLPSFI). The Cytoplasmic segment spans residues 325 to 588 (WSCERYRADV…GNPIFPQLTL (264 aa)). Residues serine 413 and serine 435 each carry the phosphoserine modification. Disordered stretches follow at residues 445–474 (QSRA…AEGG) and 511–550 (ETPL…AVGL). The span at 530-546 (PLGLSPRRLSLGSPESR) shows a compositional bias: low complexity.

Belongs to the G-protein coupled receptor 1 family.

It localises to the cell membrane. Functionally, orphan receptor. In Homo sapiens (Human), this protein is Probable G-protein coupled receptor 162 (GPR162).